Here is a 282-residue protein sequence, read N- to C-terminus: PTS system sorbose-specific EIID component (282 aa).

The PTS EIID domain occupies Thr13–Leu281. The next 4 membrane-spanning stretches (helical) occupy residues Leu135–Phe155, Gly197–Val217, Ile234–Leu254, and Pro261–Leu281.

The protein localises to the cell membrane. Functionally, the phosphoenolpyruvate-dependent sugar phosphotransferase system (PTS), a major carbohydrate active transport system, catalyzes the phosphorylation of incoming sugar substrates concomitant with their translocation across the cell membrane. The enzyme II SorABCD PTS system is involved in L-sorbose transport. This Lacticaseibacillus casei (Lactobacillus casei) protein is PTS system sorbose-specific EIID component.